The following is a 3994-amino-acid chain: Hybrid PKS-NRPs synthetase opdA (3994 aa).

The 437-residue stretch at 6-442 folds into the Ketosynthase family 3 (KS3) domain; that stretch reads PEPIAIVGSS…GTNSHVILES (437 aa). Catalysis depends on for beta-ketoacyl synthase activity residues Cys-179, His-316, and His-362. The tract at residues 559 to 881 is malonyl-CoA:ACP transacylase (MAT) domain; that stretch reads VFTGQGAQWP…LKRDSNDVEA (323 aa). The N-terminal hotdog fold stretch occupies residues 951–1085; that stretch reads HELLGRRTHD…GRLIIHLGET (135 aa). A dehydratase (DH) domain region spans residues 951–1251; the sequence is HELLGRRTHD…SVKPMAPPTA (301 aa). Positions 951-1252 constitute a PKS/mFAS DH domain; it reads HELLGRRTHD…VKPMAPPTAE (302 aa). His-983 (proton acceptor; for dehydratase activity) is an active-site residue. The interval 1100-1252 is C-terminal hotdog fold; it reads LLSVDTDEGY…VKPMAPPTAE (153 aa). Residue Asp-1159 is the Proton donor; for dehydratase activity of the active site. The methyltransferase (MT) domain stretch occupies residues 1292–1593; sequence DRVVLYYVQR…VDLAFHDLPD (302 aa). Residues 2123 to 2297 form a ketoreductase (KR) domain region; it reads TYLMVGMAGG…ASIIHIGFVT (175 aa). One can recognise a Carrier 1 domain in the interval 2406–2483; that stretch reads EAVEITQKAF…QICTNAAKQL (78 aa). At Ser-2443 the chain carries O-(pantetheine 4'-phosphoryl)serine. A disordered region spans residues 2486–2575; that stretch reads QKGGQEPSEQ…FDPDDRDYNP (90 aa). Composition is skewed to polar residues over residues 2505–2514 and 2522–2546; these read LHVSQGSLHT and TETSSVGGTENTPLTSASSSPSVTD. Residues 2547-2556 are compositionally biased toward basic and acidic residues; that stretch reads TVEKRDKGDI. Residues 2557–2570 show a composition bias toward acidic residues; it reads SVDEGPNEQFDPDD. Residues 2582–3007 form a condensation (C) domain region; it reads RLSSGQSRIY…SNTYMTVAKI (426 aa). Positions 3043-3436 are adenylation (A) (KR) domain; the sequence is HETNREDLAI…DGSLVFLGRL (394 aa). Residues 3553–3630 form the Carrier 2 domain; sequence PKLSLRQSEL…KMTMLVDLER (78 aa). Ser-3590 carries the O-(pantetheine 4'-phosphoryl)serine modification. The tract at residues 3679-3895 is reductase (RED) domain; the sequence is TGATGFLGGS…FDFKKVEEVA (217 aa).

The protein in the C-terminal section; belongs to the NRP synthetase family. It depends on pantetheine 4'-phosphate as a cofactor.

It participates in secondary metabolite biosynthesis. Functionally, hybrid PKS-NRPS synthetase; part of the gene cluster that mediates the biosynthesis of oxopyrrolidines, polyketide-amino acid hybrid compounds with feature structures of tetramic acid. The polyketide chain is first assembled by the highly reducing PKS module of opdA using acetyl-CoA as the starter unit and five malonyl-CoA as the extender units. OpdC acts as trans-acting enoyl reductase and reduces the terminal alkenyl to alkane. The 17R in oxopyrrolidine A and 15R, 17S in oxopyrrolidine B are generated by non-stereospecific catalysis of the ketoreductase (KR) domain and enoyl reductases. Then the polyketides with specific configurations are transferred to the NRPS module of opdA and linked to L-tyrosine to form an amide bond. Finally, the oxopyrrolidines are offloaded through a Dieckmann cyclization catalyzed by the terminal D domain to give a tetramic acid moiety. The chain is Hybrid PKS-NRPs synthetase opdA from Penicillium oxalicum (strain 114-2 / CGMCC 5302) (Penicillium decumbens).